Reading from the N-terminus, the 600-residue chain is Transcription factor rlmA (600 aa).

The region spanning 1 to 61 is the MADS-box domain; that stretch reads MGRRKIEIKA…KKLYEFSSCD (61 aa). Disordered stretches follow at residues 71–518 and 544–600; these read YYGP…NIET and GFGR…KSKT. Basic and acidic residues predominate over residues 75–89; the sequence is PHEHKGPEDFNGKRD. A compositionally biased stretch (polar residues) spans 151–160; the sequence is PQPQGASRPS. A compositionally biased stretch (pro residues) spans 222–242; it reads QPLPPHAIPPHPMPQPVPPHH. Residues 243 to 260 are compositionally biased toward low complexity; the sequence is QAPQHLPQHPHPLAQQTP. The segment covering 328 to 339 has biased composition (polar residues); that stretch reads HQRSLSSKSRSI. A compositionally biased stretch (basic and acidic residues) spans 364 to 384; that stretch reads PRTESADVKAEAKQNDSKEIK. A compositionally biased stretch (pro residues) spans 386 to 397; that stretch reads PAQPVAPPPPPR. Positions 440–452 are enriched in low complexity; it reads RGSATADSSSSTG. Over residues 453–468 the composition is skewed to polar residues; that stretch reads NQTVTPAKANPDTNHS. Over residues 490-501 the composition is skewed to pro residues; that stretch reads PPNPFARPPPPG. Low complexity predominate over residues 503–515; sequence ASQNSNAYNSNNN.

The protein belongs to the MEF2 family. In terms of assembly, interacts with hsp90. Phosphorylation during asexual development.

The protein localises to the nucleus. Functionally, transcription factor; part of cell wall integrity (CWI) signaling pathway composed of pkcA, the bck1-mkk2-mpka MAPK cascade and the downstream rlmA transcription regulator. The CWI signaling pathway regulates cell wall integrity and pyomelanin formation. CWI also controls oxidative stress response, gliotoxin production, iron adaptation and asexual development. Finally, CWI is constitutively required for A.fumigatus to cope with the temperature increase found in the mammalian lung environment, during infection. Positively regulates the phosphorylation of mpkA. Involved in tolerance to oxidative damage and transcriptional regulation of genes related to oxidative stress adaptation. Directly regulates the expression of regulators of conidiation, including flbB, flbC, brlA, abaA, and rasB, as well as genes involved in cell wall synthesis and remodeling. Specifically associates with the target fumiquinazoline (fmq) cluster genes promoters at conserved motifs (5'-TAWWWWTA-3') during conidiation to supplement mature conidia with fumiquinazoline C. Also controls the DHN-melanin production via binding the promoter of pksP. This Aspergillus fumigatus (strain ATCC MYA-4609 / CBS 101355 / FGSC A1100 / Af293) (Neosartorya fumigata) protein is Transcription factor rlmA.